The chain runs to 386 residues: DNA (cytosine-5)-methyltransferase 3-like (386 aa).

One can recognise an ADD domain in the interval 41 to 173 (EVKANQRNIE…LKAFYDRESE (133 aa)). A GATA-type; atypical zinc finger spans residues 52 to 82 (ICICCGSLQVHTQHPLFEGGICAPCKDKFLD). Residues 93-149 (QSYCSICCSGETLLICGNPDCTRCYCFECVDSLVGPGTSGKVHAMSNWVCYLCLPSS) form a PHD-type; atypical zinc finger.

As to quaternary structure, homodimer. Heterotetramer composed of 1 DNMT3A homodimer and 2 DNMT3L subunits (DNMT3L-DNMT3A-DNMT3A-DNMT3L). Interacts with histone H3 (via N-terminus); interaction is strongly inhibited by methylation at lysine 4 (H3K4me). Interacts with EZH2; the interaction is direct. Interacts with SPOCD1. As to expression, expressed at low levels in several tissues including testis, ovary, and thymus.

It is found in the nucleus. Functionally, catalytically inactive regulatory factor of DNA methyltransferases that can either promote or inhibit DNA methylation depending on the context. Essential for the function of DNMT3A and DNMT3B: activates DNMT3A and DNMT3B by binding to their catalytic domain. Acts by accelerating the binding of DNA and S-adenosyl-L-methionine (AdoMet) to the methyltransferases and dissociates from the complex after DNA binding to the methyltransferases. Recognizes unmethylated histone H3 lysine 4 (H3K4me0) and induces de novo DNA methylation by recruitment or activation of DNMT3. Plays a key role in embryonic stem cells and germ cells. In germ cells, required for the methylation of imprinted loci together with DNMT3A. In male germ cells, specifically required to methylate retrotransposons, preventing their mobilization. Plays a key role in embryonic stem cells (ESCs) by acting both as an positive and negative regulator of DNA methylation. While it promotes DNA methylation of housekeeping genes together with DNMT3A and DNMT3B, it also acts as an inhibitor of DNA methylation at the promoter of bivalent genes. Interacts with the EZH2 component of the PRC2/EED-EZH2 complex, preventing interaction of DNMT3A and DNMT3B with the PRC2/EED-EZH2 complex, leading to maintain low methylation levels at the promoters of bivalent genes. Promotes differentiation of ESCs into primordial germ cells by inhibiting DNA methylation at the promoter of RHOX5, thereby activating its expression. In Homo sapiens (Human), this protein is DNA (cytosine-5)-methyltransferase 3-like (DNMT3L).